A 520-amino-acid polypeptide reads, in one-letter code: Sodium-dependent dicarboxylate transporter SdcS (520 aa).

14 helical membrane passes run 30–50 (TGQLIGLILGPLLFLLTLLFF), 55–75 (LPWKGVYVLAITLWIATWWIT), 77–97 (AIPIAATSLLPIVLLPLGHIL), 104–124 (SEYGNDIIFLFLGGFILAIAM), 160–180 (SMFVSNTAAVMIMIPIGLAII), 207–227 (IGYAGTIGGLGTLIGTPPLII), 242–262 (FAKWMIVGIPTVIVLLGITWL), 298–318 (KVVQTIFVLASLLWITREFLL), 323–343 (VTSSVADGTIAIFISILLFII), 362–382 (ELPWGVLILFGGGLALAKGIS), 399–419 (GVSPILIVIVITIFVLFLTEV), 428–448 (MILPILATLSVAVGVHPLLLM), 452–472 (AMAANCAYMLPVGTPPNAIIF), and 491–511 (LISAIIIILVVYYIMPIVLGI).

The protein belongs to the SLC13A/DASS transporter (TC 2.A.47) family. NADC subfamily.

Its subcellular location is the cell membrane. Its function is as follows. Mediates the transport of the dicarboxylates fumarate, malate, and succinate across the cytoplasmic membrane via a Na(+)-electrochemical gradient. In Staphylococcus aureus (strain MRSA252), this protein is Sodium-dependent dicarboxylate transporter SdcS (sdcS).